A 408-amino-acid chain; its full sequence is CST complex subunit STN1 (408 aa).

The interval 8–195 is interaction with CTC1; the sequence is MQCESSPKEE…KVYDQPFRNP (188 aa). Residues 64-165 constitute a DNA-binding region (OB); the sequence is VDIMGAVISV…EICATIYYKV (102 aa). Winged helix-turn-helix (wHTH) regions lie at residues 201-304 and 305-408; these read EALN…YVTS and KDKD…YTAF.

This sequence belongs to the STN1 family. As to quaternary structure, component of the CST complex, composed of TEN1/C17orf106, CTC1/C17orf68 and STN1; in the complex interacts directly with TEN1 and CTC1. Interacts with ACD/TPP1, POT1 and POLA1.

The protein localises to the nucleus. The protein resides in the chromosome. It localises to the telomere. In terms of biological role, component of the CST complex proposed to act as a specialized replication factor promoting DNA replication under conditions of replication stress or natural replication barriers such as the telomere duplex. The CST complex binds single-stranded DNA with high affinity in a sequence-independent manner, while isolated subunits bind DNA with low affinity by themselves. Initially the CST complex has been proposed to protect telomeres from DNA degradation. However, the CST complex has been shown to be involved in several aspects of telomere replication. The CST complex inhibits telomerase and is involved in telomere length homeostasis; it is proposed to bind to newly telomerase-synthesized 3' overhangs and to terminate telomerase action implicating the association with the ACD:POT1 complex thus interfering with its telomerase stimulation activity. The CST complex is also proposed to be involved in fill-in synthesis of the telomeric C-strand probably implicating recruitment and activation of DNA polymerase alpha. The CST complex facilitates recovery from many forms of exogenous DNA damage; seems to be involved in the re-initiation of DNA replication at repaired forks and/or dormant origins. Required for efficicient replication of the duplex region of the telomere. Promotes efficient replication of lagging-strand telomeres. Promotes general replication start following replication-fork stalling implicating new origin firing. May be in involved in C-strand fill-in during late S/G2 phase independent of its role in telomere duplex replication. The protein is CST complex subunit STN1 of Rattus norvegicus (Rat).